The following is a 412-amino-acid chain: Phosphate-repressible acid phosphatase (412 aa).

An N-terminal signal peptide occupies residues 1–19; it reads MLTKQTLLAFVGALALATG. N-linked (GlcNAc...) asparagine glycans are attached at residues asparagine 74, asparagine 121, asparagine 186, and asparagine 208. Aspartate 215 serves as the catalytic Proton donor. N-linked (GlcNAc...) asparagine glycans are attached at residues asparagine 217, asparagine 332, and asparagine 343.

The N-terminus is blocked.

Its subcellular location is the secreted. The enzyme catalyses a phosphate monoester + H2O = an alcohol + phosphate. This chain is Phosphate-repressible acid phosphatase (PHOA), found in Penicillium chrysogenum (Penicillium notatum).